The sequence spans 208 residues: Protein-L-isoaspartate O-methyltransferase (208 aa).

The active site involves Ser59.

It belongs to the methyltransferase superfamily. L-isoaspartyl/D-aspartyl protein methyltransferase family.

The protein resides in the cytoplasm. The enzyme catalyses [protein]-L-isoaspartate + S-adenosyl-L-methionine = [protein]-L-isoaspartate alpha-methyl ester + S-adenosyl-L-homocysteine. Catalyzes the methyl esterification of L-isoaspartyl residues in peptides and proteins that result from spontaneous decomposition of normal L-aspartyl and L-asparaginyl residues. It plays a role in the repair and/or degradation of damaged proteins. The chain is Protein-L-isoaspartate O-methyltransferase from Proteus mirabilis (strain HI4320).